The chain runs to 293 residues: Xyloglucan endotransglucosylase/hydrolase protein 31 (293 aa).

Residues 1-20 form the signal peptide; the sequence is MALSLIFLALLVLCPSSGHS. The GH16 domain occupies 29–230; the sequence is YPSSRVPTSP…YRYQPFVAKY (202 aa). E114 acts as the Nucleophile in catalysis. Catalysis depends on E118, which acts as the Proton donor. Xyloglucan-binding positions include E118, 131–133, 141–148, and 209–210; these read QTN, DRNVIGRE, and DW. Intrachain disulfides connect C238–C246 and C280–C293. A xyloglucan-binding site is contributed by R285.

Belongs to the glycosyl hydrolase 16 family. XTH group 3 subfamily. Interacts with XTH17. The formation of an XTH17-XTH31 dimer may be required for XET activity. In terms of processing, contains at least one intrachain disulfide bond essential for its enzymatic activity. As to expression, predominantly expressed in root. Weakly expressed in influorescence stems. Expressed in root tips and elongation zones, stems, young leaves, flowers and siliques. Expressed in root, hypocotyl, and etiolated whole seedlings.

Its subcellular location is the secreted. It is found in the cell wall. The protein resides in the extracellular space. The protein localises to the apoplast. It localises to the cell membrane. It carries out the reaction breaks a beta-(1-&gt;4) bond in the backbone of a xyloglucan and transfers the xyloglucanyl segment on to O-4 of the non-reducing terminal glucose residue of an acceptor, which can be a xyloglucan or an oligosaccharide of xyloglucan.. It catalyses the reaction xyloglucan + H2O = xyloglucan oligosaccharides.. Its function is as follows. Catalyzes xyloglucan endohydrolysis (XEH) and/or endotransglycosylation (XET). Cleaves and religates xyloglucan polymers, an essential constituent of the primary cell wall, and thereby participates in cell wall construction of growing tissues. Involved in the accumulation of hemicelluloses. Has a high XEH activity and only a slight XET activity in vitro, but the main in planta activity seems to be XET, thus controlling aluminum sensitivity. Acceptor preferences are XXXGol = XXFGol &gt; XXLGol &gt; XLLGol = XLFGol. In Arabidopsis thaliana (Mouse-ear cress), this protein is Xyloglucan endotransglucosylase/hydrolase protein 31.